The primary structure comprises 124 residues: Large ribosomal subunit protein bL19 (124 aa).

This sequence belongs to the bacterial ribosomal protein bL19 family.

This protein is located at the 30S-50S ribosomal subunit interface and may play a role in the structure and function of the aminoacyl-tRNA binding site. The chain is Large ribosomal subunit protein bL19 from Dinoroseobacter shibae (strain DSM 16493 / NCIMB 14021 / DFL 12).